We begin with the raw amino-acid sequence, 603 residues long: Geraniol synthase, chloroplastic (603 aa).

The transit peptide at 1 to 50 (MALQMIAPFLSSFLPNPRHSLAAHGLTHQKCVSKHISCSTTTPTYSTTVP) directs the protein to the chloroplast. 5 residues coordinate (2E)-geranyl diphosphate: Arg301, Asp338, Asp342, Arg479, and Asp482. Residues Asp338 and Asp342 each contribute to the Mg(2+) site. Positions 338–342 (DDIYD) match the DDXXD motif motif. Asp482, Thr486, and Glu490 together coordinate Mg(2+).

It belongs to the terpene synthase family. Tpsb subfamily. As to quaternary structure, homodimer. The cofactor is Mg(2+). Requires Mn(2+) as cofactor. Expressed in the oil cells of the leaves.

It is found in the plastid. The protein resides in the chloroplast. The catalysed reaction is (2E)-geranyl diphosphate + H2O = (2E)-geraniol + diphosphate. Its pathway is secondary metabolite biosynthesis; terpenoid biosynthesis. In terms of biological role, monoterpene synthase that catalyzes the formation of geraniol from geranyl diphosphate. The chain is Geraniol synthase, chloroplastic (GerS) from Cinnamomum tenuipile (Alseodaphne mollis).